Reading from the N-terminus, the 849-residue chain is Protein translocase subunit SecA (849 aa).

Residues glutamine 85, 103 to 107, and aspartate 493 each bind ATP; that span reads GEGKT. Residues cysteine 832, cysteine 834, cysteine 843, and histidine 844 each contribute to the Zn(2+) site.

It belongs to the SecA family. In terms of assembly, monomer and homodimer. Part of the essential Sec protein translocation apparatus which comprises SecA, SecYEG and auxiliary proteins SecDF. Other proteins may also be involved. Zn(2+) is required as a cofactor.

It localises to the cell membrane. The protein resides in the cytoplasm. It catalyses the reaction ATP + H2O + cellular proteinSide 1 = ADP + phosphate + cellular proteinSide 2.. Part of the Sec protein translocase complex. Interacts with the SecYEG preprotein conducting channel. Has a central role in coupling the hydrolysis of ATP to the transfer of proteins into and across the cell membrane, serving as an ATP-driven molecular motor driving the stepwise translocation of polypeptide chains across the membrane. This is Protein translocase subunit SecA from Streptococcus thermophilus (strain ATCC BAA-250 / LMG 18311).